A 285-amino-acid chain; its full sequence is Protoheme IX farnesyltransferase (285 aa).

The next 9 membrane-spanning stretches (helical) occupy residues 13-33, 40-60, 89-109, 110-130, 137-157, 165-185, 194-214, 218-238, and 265-285; these read LGKL…AFLA, LLPI…AMII, EAII…FIDN, ILTA…YTIL, LNIV…YTSL, GFLL…SLAL, AHYP…AIAI, LMIP…LIAF, and FIFS…VKLI.

It belongs to the UbiA prenyltransferase family. Protoheme IX farnesyltransferase subfamily.

Its subcellular location is the cell membrane. It carries out the reaction heme b + (2E,6E)-farnesyl diphosphate + H2O = Fe(II)-heme o + diphosphate. The protein operates within porphyrin-containing compound metabolism; heme O biosynthesis; heme O from protoheme: step 1/1. Converts heme B (protoheme IX) to heme O by substitution of the vinyl group on carbon 2 of heme B porphyrin ring with a hydroxyethyl farnesyl side group. This Saccharolobus islandicus (strain Y.G.57.14 / Yellowstone #1) (Sulfolobus islandicus) protein is Protoheme IX farnesyltransferase.